We begin with the raw amino-acid sequence, 963 residues long: Kinesin-1 heavy chain (963 aa).

An N-acetylalanine modification is found at alanine 2. The 318-residue stretch at asparagine 8–isoleucine 325 folds into the Kinesin motor domain. Glycine 85–threonine 92 contributes to the ATP binding site. Lysine 213 is covalently cross-linked (Glycyl lysine isopeptide (Lys-Gly) (interchain with G-Cter in SUMO2)). Residues valine 329–arginine 914 adopt a coiled-coil conformation. Residues serine 908–valine 963 form a disordered region. The segment at glycine 915 to valine 963 is globular. Residue serine 933 is modified to Phosphoserine. Arginine 956 is modified (omega-N-methylarginine).

Belongs to the TRAFAC class myosin-kinesin ATPase superfamily. Kinesin family. Kinesin subfamily. Oligomer composed of two heavy chains and two light chains. Interacts with GRIP1 and PPP1R42. Interacts with SYBU. Interacts with JAKMIP1. Interacts with PLEKHM2. Interacts with ECPAS. Interacts with ZFYVE27. Found in a complex with OGT, RHOT1, RHOT2 and TRAK1. Interacts with APP (via cytoplasmic domain).

It localises to the cytoplasm. Its subcellular location is the cytoskeleton. The protein localises to the cytolytic granule membrane. The protein resides in the lysosome membrane. Microtubule-dependent motor required for normal distribution of mitochondria and lysosomes. Can induce formation of neurite-like membrane protrusions in non-neuronal cells in a ZFYVE27-dependent manner. Regulates centrosome and nuclear positioning during mitotic entry. During the G2 phase of the cell cycle in a BICD2-dependent manner, antagonizes dynein function and drives the separation of nuclei and centrosomes. Required for anterograde axonal transportation of MAPK8IP3/JIP3 which is essential for MAPK8IP3/JIP3 function in axon elongation. Through binding with PLEKHM2 and ARL8B, directs lysosome movement toward microtubule plus ends. Involved in NK cell-mediated cytotoxicity. Drives the polarization of cytolytic granules and microtubule-organizing centers (MTOCs) toward the immune synapse between effector NK lymphocytes and target cells. This chain is Kinesin-1 heavy chain, found in Homo sapiens (Human).